The sequence spans 210 residues: Large ribosomal subunit protein uL4 (210 aa).

The segment covering 41–51 (ANARQGTQSTK) has biased composition (polar residues). 2 disordered regions span residues 41-60 (ANARQGTQSTKTRGEVQGSS) and 67-98 (KGTGNARMGTNRSPVRRHGGVAFGPRPRDFSK).

The protein belongs to the universal ribosomal protein uL4 family. Part of the 50S ribosomal subunit.

In terms of biological role, one of the primary rRNA binding proteins, this protein initially binds near the 5'-end of the 23S rRNA. It is important during the early stages of 50S assembly. It makes multiple contacts with different domains of the 23S rRNA in the assembled 50S subunit and ribosome. Forms part of the polypeptide exit tunnel. The polypeptide is Large ribosomal subunit protein uL4 (Dehalococcoides mccartyi (strain ATCC BAA-2266 / KCTC 15142 / 195) (Dehalococcoides ethenogenes (strain 195))).